The following is a 714-amino-acid chain: Lipase maturation factor 2 (714 aa).

The next 9 membrane-spanning stretches (helical) occupy residues 11–31, 79–99, 103–125, 159–179, 221–241, 257–277, 304–324, 358–378, and 398–418; these read LFLAGLAAAYLAAFVSLYLQI, MELLCLLGAVASMGALLCAPL, LLFAVLRVFYLSLYQVGQVFLYF, SVTFWLVRWLLFRLMFASGVV, FSVVATYVIEIAVPLLFFMPI, ILIILTGNYNFFNALTIVLAF, TLLSFLSTLLELATYALLLYW, VTLPLVGLGFLSLSWEILSAL, and AVFATATVGMFAISLVPFTYI. N-linked (GlcNAc...) asparagine glycosylation is present at asparagine 483. A helical transmembrane segment spans residues 629–649; sequence PFSPHVVLWSLYVVAATTCLL. Positions 654–669 are enriched in basic residues; that stretch reads RRPRGGAPPTRHKAPK. The interval 654–714 is disordered; the sequence is RRPRGGAPPT…EGPRGTKRRK (61 aa). Residues 683-708 are compositionally biased toward basic and acidic residues; it reads RRKEGREAEERGEGRSRGAADGEGPR.

It belongs to the lipase maturation factor family.

The protein resides in the endoplasmic reticulum membrane. Its function is as follows. Involved in the maturation of specific proteins in the endoplasmic reticulum. May be required for maturation and transport of active lipoprotein lipase (LPL) through the secretory pathway. The polypeptide is Lipase maturation factor 2 (LMF2) (Gallus gallus (Chicken)).